The sequence spans 530 residues: Per os infectivity factor 1 (530 aa).

The first 15 residues, 1-15 (MHFAIILLFLLVIIA), serve as a signal peptide directing secretion.

In terms of assembly, forms the PIF complex together with PIF2 and PIF3. The complex also interacts with per os infectivity factor PIF0.

It is found in the virion membrane. Functionally, per os infectivity factor that mediates the specific binding of occluded virions (ODV) to the host midgut target cells. This Autographa californica nuclear polyhedrosis virus (AcMNPV) protein is Per os infectivity factor 1.